Reading from the N-terminus, the 444-residue chain is Probable D-serine dehydratase (444 aa).

Residue Lys118 is modified to N6-(pyridoxal phosphate)lysine.

It belongs to the serine/threonine dehydratase family. DsdA subfamily. Pyridoxal 5'-phosphate is required as a cofactor.

The enzyme catalyses D-serine = pyruvate + NH4(+). The chain is Probable D-serine dehydratase from Desulfitobacterium hafniense (strain Y51).